Reading from the N-terminus, the 389-residue chain is Methionyl-tRNA formyltransferase, mitochondrial (389 aa).

It belongs to the Fmt family.

The protein resides in the mitochondrion. It catalyses the reaction L-methionyl-tRNA(fMet) + (6R)-10-formyltetrahydrofolate = N-formyl-L-methionyl-tRNA(fMet) + (6S)-5,6,7,8-tetrahydrofolate + H(+). Its function is as follows. Methionyl-tRNA formyltransferase that formylates methionyl-tRNA in mitochondria and is crucial for translation initiation. The polypeptide is Methionyl-tRNA formyltransferase, mitochondrial (MTFMT) (Homo sapiens (Human)).